Here is a 1877-residue protein sequence, read N- to C-terminus: Neuron navigator 1 (1877 aa).

N-acetylmethionine is present on Met-1. Positions 1–59 (MLGSSVKSVQPEVELSSGGGDEGADEPRGAGRKAAAADGRGMLPKRAKAPGGGGGMAKA) are disordered. Residues 32–41 (RKAAAADGRG) are compositionally biased toward low complexity. Residues Ser-90, Ser-142, and Ser-152 each carry the phosphoserine modification. A disordered region spans residues 114 to 225 (DMAKAPKGLG…PVPSAKGQEE (112 aa)). Thr-159 is modified (phosphothreonine). Phosphoserine is present on residues Ser-194 and Ser-199. A compositionally biased stretch (low complexity) spans 205–214 (SSKAKAQKSS). The stretch at 255–280 (ESQRKRTVQNVLDLRQNLEETMSSLR) forms a coiled coil. The interval 294–336 (YDSDDANPRSVSSLSNRSSPLSWRYGQSSPRLQAGDAPSVGGS) is disordered. Ser-296, Ser-308, Ser-312, Ser-362, and Ser-391 each carry phosphoserine. The segment covering 301 to 315 (PRSVSSLSNRSSPLS) has biased composition (low complexity). Disordered regions lie at residues 386–839 (KSGY…PLPS) and 892–989 (MSLP…PMSL). Low complexity-rich tracts occupy residues 411–425 (DESSSISSGLSDASD) and 433–448 (NASSSLNSLPSTPTAS). A phosphoserine mark is found at Ser-452, Ser-474, Ser-476, and Ser-490. Over residues 476–486 (SEEKAPKKLEY) the composition is skewed to basic and acidic residues. Residues 503–519 (ERPESCDDSSKGGELKK) show a composition bias toward basic and acidic residues. Ser-528 bears the Phosphoserine mark. Phosphothreonine is present on Thr-534. A Phosphoserine modification is found at Ser-541. The residue at position 544 (Thr-544) is a Phosphothreonine. A compositionally biased stretch (basic and acidic residues) spans 555-566 (GKPEGKATDKGK). Thr-572 is modified (phosphothreonine). The segment covering 581 to 591 (AGRDRLSDAKK) has biased composition (basic and acidic residues). Composition is skewed to polar residues over residues 615–635 (GTATVMQTGGSATLSKIQKSS) and 645–655 (RKTSLDVSNSA). At Ser-648 the chain carries Phosphoserine. At Arg-688 the chain carries Omega-N-methylarginine. Composition is skewed to polar residues over residues 698-710 (IDPSLLSTKQGGL) and 724-733 (GRTTPAPVNQ). Positions 731-756 (VNQTDREKEKAKAKAVALDSDNISLK) form a coiled coil. Phosphoserine occurs at positions 750, 754, 760, 797, and 808. The segment covering 751–773 (DNISLKSIGSPESTPKNQASHPT) has biased composition (polar residues). Residues 805 to 818 (NSNSLDLPSSSDTT) are compositionally biased toward low complexity. Residues 902–913 (TPVPTPPAPPAA) show a composition bias toward pro residues. A Phosphoserine modification is found at Ser-1000. At Thr-1006 the chain carries Phosphothreonine. Residues 1072–1163 (SSAEERMQSE…SEAQAVIQGA (92 aa)) adopt a coiled-coil conformation. Position 1170 is a phosphothreonine (Thr-1170). 4 disordered regions span residues 1172-1204 (KELRIKRQNSSDSISSLNSITSHSSIGSSKDAD), 1244-1306 (ATPD…EKKE), 1359-1383 (LKVAPGPSSGSTPGQVPGSSALSSP), and 1810-1843 (KLYHLPPPTVGPHSIASPPEDRTVKDSTPSSLDS). A Phosphoserine modification is found at Ser-1181. Low complexity predominate over residues 1181–1200 (SSDSISSLNSITSHSSIGSS). Residues 1246–1264 (PDSSAPSSPKLQHGSTETA) show a composition bias toward polar residues. Ser-1265 carries the phosphoserine modification. A compositionally biased stretch (low complexity) spans 1265-1275 (SPSIKSSTSSS). Residues 1303–1362 (EKKEVSELRSELWEKEMKLTDIRLEALNSAHQLDQLRETMHNMQLEVDLLKAENDRLKVA) adopt a coiled-coil conformation. Residues 1366 to 1383 (SSGSTPGQVPGSSALSSP) are compositionally biased toward polar residues. Ser-1382 is modified (phosphoserine).

Belongs to the Nav/unc-53 family. Interacts with tubulin. As to expression, broadly expressed at low levels. Expressed at high levels in heart, skeletal muscle and placenta.

The protein localises to the cytoplasm. It is found in the cytoskeleton. Functionally, may be involved in neuronal migration. This is Neuron navigator 1 (NAV1) from Homo sapiens (Human).